We begin with the raw amino-acid sequence, 123 residues long: MARIAGIDLPKEKRVEIGLTYIYGIGLTSSRKIIKATSVNPETRVKDLTEEEVNALRDYINKNFKIEGDLRREVALNIKRLVEIGCYRGIRHRRGLPVRGQKTKTNARTRKGPKKAVASKKKK.

The segment at 95 to 123 (GLPVRGQKTKTNARTRKGPKKAVASKKKK) is disordered.

The protein belongs to the universal ribosomal protein uS13 family. As to quaternary structure, part of the 30S ribosomal subunit. Forms a loose heterodimer with protein S19. Forms two bridges to the 50S subunit in the 70S ribosome.

Its function is as follows. Located at the top of the head of the 30S subunit, it contacts several helices of the 16S rRNA. In the 70S ribosome it contacts the 23S rRNA (bridge B1a) and protein L5 of the 50S subunit (bridge B1b), connecting the 2 subunits; these bridges are implicated in subunit movement. Contacts the tRNAs in the A and P-sites. The protein is Small ribosomal subunit protein uS13 of Clostridium acetobutylicum (strain ATCC 824 / DSM 792 / JCM 1419 / IAM 19013 / LMG 5710 / NBRC 13948 / NRRL B-527 / VKM B-1787 / 2291 / W).